A 525-amino-acid polypeptide reads, in one-letter code: Golgi resident protein GCP60 (525 aa).

Position 2 is an N-acetylalanine (Ala-2). Residues 12–68 (VSLDGLTLSPDSEERPGAEGAPPQTPPSSAPGNGLGSGASGQQREPGEAAAEGAAEE) are disordered. Ser-13 carries the post-translational modification Phosphoserine. Phosphothreonine is present on Thr-18. A phosphoserine mark is found at Ser-20 and Ser-40. A compositionally biased stretch (low complexity) spans 52 to 64 (GQQREPGEAAAEG). In terms of domain architecture, ACB spans 80–171 (LEELYGLALR…LNKCCPLLSA (92 aa)). A coiled-coil region spans residues 169-254 (LSAYVASHRI…AALNSQTAVQ (86 aa)). Residues 180–226 (KEEEEKRRKAEEERRQREEEERERLQKEEEKRKREKEDRLRREEEER) form a disordered region. Positions 238–305 (QQKQQIMAAL…QQQAALQKQQ (68 aa)) are q domain; Interaction with PI4KB, TBC1D22A and TBC1D22B. Over residues 319–336 (KVNTAGASDTLSVNGQAK) the composition is skewed to polar residues. Positions 319–346 (KVNTAGASDTLSVNGQAKTHTENSEKVL) are disordered. Residues 337–346 (THTENSEKVL) are compositionally biased toward basic and acidic residues. One can recognise a GOLD domain in the interval 381–523 (KEKIRQDADS…SKSVYYRVYY (143 aa)). Residues 448–470 (SDEEEEEEENVTCEEKAKKNANK) adopt a coiled-coil conformation.

In terms of assembly, homodimer. Interacts with the C-terminal cytoplasmic domain of giantin/GOLGB1. Interacts with PBR and PKA regulatory subunit RI-alpha. Does not interact with PKA regulatory subunit RI-beta nor PKA regulatory subunit RII-alpha. Interacts (via Q domain) with PI4KB (via N-terminus). Interacts (via Q domain) with TBC1D22A and TBC1D22B; interactions with PI4KB and with TBC1D22A and TBC1D22B are mutually exclusive. Interacts with C10ORF76 and RAB11B. Expressed in brain (hippocampus, olfactory bulb, neuronal and glial cells of the cortex), eye, submaxillary gland, testis (interstitial and tubular compartments), ovary (granulosa cells, theca cells at late stages and primary follicles), adrenal gland (fasciculata and glomerulosa cells), heart, liver, and steroidogenic cell lines.

It is found in the golgi apparatus membrane. It localises to the mitochondrion. In terms of biological role, involved in the maintenance of Golgi structure by interacting with giantin, affecting protein transport between the endoplasmic reticulum and Golgi. Involved in hormone-induced steroid biosynthesis in testicular Leydig cells. Recruits PI4KB to the Golgi apparatus membrane; enhances the enzyme activity of PI4KB activity via its membrane recruitment thereby increasing the local concentration of the substrate in the vicinity of the kinase. This chain is Golgi resident protein GCP60 (Acbd3), found in Mus musculus (Mouse).